A 428-amino-acid polypeptide reads, in one-letter code: Gamma-glutamyl phosphate reductase (428 aa).

It belongs to the gamma-glutamyl phosphate reductase family.

Its subcellular location is the cytoplasm. It catalyses the reaction L-glutamate 5-semialdehyde + phosphate + NADP(+) = L-glutamyl 5-phosphate + NADPH + H(+). The protein operates within amino-acid biosynthesis; L-proline biosynthesis; L-glutamate 5-semialdehyde from L-glutamate: step 2/2. Its function is as follows. Catalyzes the NADPH-dependent reduction of L-glutamate 5-phosphate into L-glutamate 5-semialdehyde and phosphate. The product spontaneously undergoes cyclization to form 1-pyrroline-5-carboxylate. The chain is Gamma-glutamyl phosphate reductase from Streptomyces coelicolor (strain ATCC BAA-471 / A3(2) / M145).